We begin with the raw amino-acid sequence, 279 residues long: Methylthioribulose-1-phosphate dehydratase (279 aa).

C132 contacts substrate. Residues H150 and H152 each contribute to the Zn(2+) site. The active-site Proton donor/acceptor is E175. Residue H240 coordinates Zn(2+).

It belongs to the aldolase class II family. MtnB subfamily. Zn(2+) is required as a cofactor.

The protein resides in the cytoplasm. The enzyme catalyses 5-(methylsulfanyl)-D-ribulose 1-phosphate = 5-methylsulfanyl-2,3-dioxopentyl phosphate + H2O. It functions in the pathway amino-acid biosynthesis; L-methionine biosynthesis via salvage pathway; L-methionine from S-methyl-5-thio-alpha-D-ribose 1-phosphate: step 2/6. In terms of biological role, catalyzes the dehydration of methylthioribulose-1-phosphate (MTRu-1-P) into 2,3-diketo-5-methylthiopentyl-1-phosphate (DK-MTP-1-P). The polypeptide is Methylthioribulose-1-phosphate dehydratase (Candida tropicalis (strain ATCC MYA-3404 / T1) (Yeast)).